Reading from the N-terminus, the 428-residue chain is Flotillin-2a (428 aa).

Residues Cys-4, Cys-19, and Cys-20 are each lipidated (S-palmitoyl cysteine).

The protein belongs to the band 7/mec-2 family. Flotillin subfamily. As to quaternary structure, heterooligomer; Heterooligomerizes with ic complex of flotillins 1 and 2. Post-translationally, palmitoylation may be required for the formation of higher order complexes and for neurite outgrowth in cultured neural stem cells.

It localises to the membrane. Its subcellular location is the endosome. Functionally, may play a role in axon growth and regeneration. May be involved in epidermal cell adhesion and epidermal structure and function. In Danio rerio (Zebrafish), this protein is Flotillin-2a (flot2a).